The sequence spans 429 residues: Serine--tRNA ligase (429 aa).

An L-serine-binding site is contributed by 229–231 (TAE). Residue 260–262 (RSE) coordinates ATP. Residue Glu-283 coordinates L-serine. 347 to 350 (EISS) provides a ligand contact to ATP. Ser-383 serves as a coordination point for L-serine.

Belongs to the class-II aminoacyl-tRNA synthetase family. Type-1 seryl-tRNA synthetase subfamily. In terms of assembly, homodimer. The tRNA molecule binds across the dimer.

The protein localises to the cytoplasm. The catalysed reaction is tRNA(Ser) + L-serine + ATP = L-seryl-tRNA(Ser) + AMP + diphosphate + H(+). It catalyses the reaction tRNA(Sec) + L-serine + ATP = L-seryl-tRNA(Sec) + AMP + diphosphate + H(+). It participates in aminoacyl-tRNA biosynthesis; selenocysteinyl-tRNA(Sec) biosynthesis; L-seryl-tRNA(Sec) from L-serine and tRNA(Sec): step 1/1. Its function is as follows. Catalyzes the attachment of serine to tRNA(Ser). Is also able to aminoacylate tRNA(Sec) with serine, to form the misacylated tRNA L-seryl-tRNA(Sec), which will be further converted into selenocysteinyl-tRNA(Sec). The sequence is that of Serine--tRNA ligase from Orientia tsutsugamushi (strain Boryong) (Rickettsia tsutsugamushi).